We begin with the raw amino-acid sequence, 238 residues long: Purine nucleoside phosphorylase DeoD-type (238 aa).

Residue H4 participates in a purine D-ribonucleoside binding. Phosphate contacts are provided by residues G20, R24, R43, and 87–90; that span reads RVGS. Residues 179–181 and 203–204 contribute to the a purine D-ribonucleoside site; these read EME and SD. D204 acts as the Proton donor in catalysis.

The protein belongs to the PNP/UDP phosphorylase family. Homohexamer; trimer of homodimers.

It catalyses the reaction a purine D-ribonucleoside + phosphate = a purine nucleobase + alpha-D-ribose 1-phosphate. It carries out the reaction a purine 2'-deoxy-D-ribonucleoside + phosphate = a purine nucleobase + 2-deoxy-alpha-D-ribose 1-phosphate. Functionally, catalyzes the reversible phosphorolytic breakdown of the N-glycosidic bond in the beta-(deoxy)ribonucleoside molecules, with the formation of the corresponding free purine bases and pentose-1-phosphate. This is Purine nucleoside phosphorylase DeoD-type from Mannheimia succiniciproducens (strain KCTC 0769BP / MBEL55E).